The chain runs to 98 residues: Sarcosine oxidase subunit delta (98 aa).

Zn(2+) contacts are provided by C6, C9, H59, and C63.

The protein belongs to the SoxD family. As to quaternary structure, heterotetramer composed of subunits alpha (SoxA), beta (SoxB), gamma (SoxG) and delta (SoxD).

The protein localises to the cytoplasm. The enzyme catalyses sarcosine + (6S)-5,6,7,8-tetrahydrofolate + O2 = (6R)-5,10-methylene-5,6,7,8-tetrahydrofolate + glycine + H2O2. The catalysed reaction is sarcosine + O2 + H2O = formaldehyde + glycine + H2O2. In terms of biological role, in the presence of tetrahydrofolate, catalyzes the oxidative demethylation of sarcosine to yield glycine, 5,10-methylenetetrahydrofolate and hydrogen peroxide. In the absence of tetrahydrofolate, catalyzes the oxidative demethylation of sarcosine to yield glycine, formaldehyde and hydrogen peroxide. This is Sarcosine oxidase subunit delta from Corynebacterium sp. (strain P-1).